Here is a 115-residue protein sequence, read N- to C-terminus: Large ribosomal subunit protein bL20 (115 aa).

The protein belongs to the bacterial ribosomal protein bL20 family.

Binds directly to 23S ribosomal RNA and is necessary for the in vitro assembly process of the 50S ribosomal subunit. It is not involved in the protein synthesizing functions of that subunit. The protein is Large ribosomal subunit protein bL20 of Chlorobium phaeobacteroides (strain BS1).